The following is an 878-amino-acid chain: Microtubule-associated protein homolog maph-1.1 (878 aa).

Disordered stretches follow at residues 224-425 (ALSD…AQAT) and 456-518 (EIPP…PVVP). 4 stretches are compositionally biased toward low complexity: residues 241 to 268 (PSARPATTTGTATRPTRPAVPAASAPRA), 278 to 293 (SRPTTTRNAAPAPRTA), 310 to 321 (APTRAPVPARSA), and 328 to 339 (APAKPAANTAKA). Basic and acidic residues-rich tracts occupy residues 416-425 (PPRHEVAQAT) and 480-496 (EEDKIPEPVDAFKKPDP).

Belongs to the MAP1A/MAP1B/MAP1S family. Interacts with dlg-1.

It is found in the cell projection. The protein localises to the dendrite. The protein resides in the perikaryon. Its subcellular location is the axon. It localises to the cytoplasm. It is found in the cytoskeleton. The sequence is that of Microtubule-associated protein homolog maph-1.1 from Caenorhabditis elegans.